The chain runs to 829 residues: DNA topoisomerase 1 (829 aa).

The disordered stretch occupies residues 1–248; the sequence is MSEDHVQNDS…AKGNEEGVKK (248 aa). Positions 22–36 are enriched in basic residues; the sequence is HKHKKDKEHRHKEHK. Basic and acidic residues-rich tracts occupy residues 37 to 58, 68 to 159, and 193 to 220; these read KDKD…SEKK, KHRE…EKMK, and KENK…DDKK. 3 interaction with DNA regions span residues 481–482, 544–549, and 641–643; these read KY, RAGNEK, and TAK. The region spanning 488–821 is the Topo IB-type catalytic domain; it reads SSRIKGEKDW…SIWQTTTSNF (334 aa). Tyr-779 acts as the O-(3'-phospho-DNA)-tyrosine intermediate in catalysis.

This sequence belongs to the type IB topoisomerase family. Monomer.

It is found in the nucleus. The catalysed reaction is ATP-independent breakage of single-stranded DNA, followed by passage and rejoining.. Its function is as follows. Releases the supercoiling and torsional tension of DNA introduced during the DNA replication and transcription by transiently cleaving and rejoining one strand of the DNA duplex. Introduces a single-strand break via transesterification at a target site in duplex DNA. The scissile phosphodiester is attacked by the catalytic tyrosine of the enzyme, resulting in the formation of a DNA-(3'-phosphotyrosyl)-enzyme intermediate and the expulsion of a 5'-OH DNA strand. TThe free DNA strand then rotates around the intact phosphodiester bond on the opposing strand, thus removing DNA supercoils. Finally, in the religation step, the DNA 5'-OH attacks the covalent intermediate to expel the active-site tyrosine and restore the DNA phosphodiester backbone. May play a role in the circadian transcription of the core circadian clock component BMAL1. The chain is DNA topoisomerase 1 (top1) from Xenopus laevis (African clawed frog).